The primary structure comprises 671 residues: Probable potassium transport system protein Kup 2 (671 aa).

12 consecutive transmembrane segments (helical) span residues 12–32 (FAGL…SPLY), 56–76 (ISLI…MIAL), 99–119 (WLVI…TLTP), 139–159 (IPVP…VILF), 172–192 (AFGP…IANL), 218–238 (VGIL…ALYS), 251–271 (SWPY…AWIL), 296–316 (LFAI…LITG), 345–365 (IYIP…VFLF), 374–394 (AYGL…FEYL), 400–420 (PLYL…MFLI), and 429–449 (GGYV…VWFY).

Belongs to the HAK/KUP transporter (TC 2.A.72) family.

The protein resides in the cell membrane. The catalysed reaction is K(+)(in) + H(+)(in) = K(+)(out) + H(+)(out). Its function is as follows. Transport of potassium into the cell. Likely operates as a K(+):H(+) symporter. The protein is Probable potassium transport system protein Kup 2 of Lactobacillus acidophilus (strain ATCC 700396 / NCK56 / N2 / NCFM).